Reading from the N-terminus, the 283-residue chain is 2-dehydro-3-deoxyphosphooctonate aldolase (283 aa).

It belongs to the KdsA family.

The protein localises to the cytoplasm. The catalysed reaction is D-arabinose 5-phosphate + phosphoenolpyruvate + H2O = 3-deoxy-alpha-D-manno-2-octulosonate-8-phosphate + phosphate. It functions in the pathway carbohydrate biosynthesis; 3-deoxy-D-manno-octulosonate biosynthesis; 3-deoxy-D-manno-octulosonate from D-ribulose 5-phosphate: step 2/3. Its pathway is bacterial outer membrane biogenesis; lipopolysaccharide biosynthesis. This chain is 2-dehydro-3-deoxyphosphooctonate aldolase, found in Parasynechococcus marenigrum (strain WH8102).